The chain runs to 579 residues: MKKKAEWPRKLRSQEWYGGTSRDVIYHRGWLKNQGYPHDLFDGRPVIGILNTWSDMTPCNGHLRELAEKVKAGVWEAGGFPLEVPVFSASENTFRPTAMMYRNLAALAVEEAIRGQPMDGCVLLVGCDKTTPSLLMGAASCDLPSIVVTGGPMLNGYFRGERVGSGTHLWKFSEMVKAGEMTQAEFLEAEASMSRSSGTCNTMGTASTMASMAEALGMALSGNAAIPGVDSRRKVMAQLTGRRIVQMVKDDLKPSEIMTKQAFENAIRTNAAIGGSTNAVIHLLAIAGRVGIDLSLDDWDRCGRDVPTIVNLMPSGKYLMEEFFYAGGLPVVLKRLGEAGLLHKDALTVSGETVWDEVKDVVNWNEDVILPAEKALTSSGGIVVLRGNLAPKGAVLKPSAASPHLLVHKGRAVVFEDIDDYKAKINDDNLDIDENCIMVMKNCGPKGYPGMAEVGNMGLPPKVLKKGILDMVRISDARMSGTAYGTVVLHTSPEAAVGGPLAVVKNGDMIELDVPNRRLHLDISDEELARRLAEWQPNHDLPTSGYAFLHQQHVEGADTGADLDFLKGCRGNAVGKDSH.

[2Fe-2S] cluster is bound at residue Cys-59. Position 91 (Glu-91) interacts with Mg(2+). Cys-127 lines the [2Fe-2S] cluster pocket. Asp-128 is a Mg(2+) binding site. A [2Fe-2S] cluster-binding site is contributed by Cys-200. Residue Glu-453 coordinates Mg(2+).

This sequence belongs to the IlvD/Edd family. As to quaternary structure, homotetramer. [2Fe-2S] cluster is required as a cofactor. It depends on Mg(2+) as a cofactor.

It carries out the reaction L-arabinonate = 2-dehydro-3-deoxy-L-arabinonate + H2O. The catalysed reaction is D-galactonate = 2-dehydro-3-deoxy-D-galactonate + H2O. The enzyme catalyses D-fuconate = 2-dehydro-3-deoxy-D-fuconate + H2O. It functions in the pathway carbohydrate metabolism. Its function is as follows. Catalyzes the dehydration of L-arabinonate to 2-dehydro-3-deoxy-L-arabinonate during L-arabinose degradation. Can also dehydrate D-galactonate and D-fuconate with good catalytic efficiency. Has weak activity with D-xylonate and D-gluconate. The polypeptide is L-arabinonate dehydratase (Rhizobium leguminosarum bv. trifolii (strain WSM2304)).